A 370-amino-acid chain; its full sequence is Phenylalanine dehydrogenase (370 aa).

Arg-44 provides a ligand contact to NAD(+). An L-phenylalanine-binding site is contributed by Lys-68. Lys-80 serves as the catalytic Proton donor/acceptor. 114 to 115 (TD) contributes to the L-phenylalanine binding site. NAD(+) contacts are provided by residues Asp-115, Ser-146, Thr-150, 180–186 (GLGKVGF), 203–204 (DV), 243–244 (AI), and 264–266 (AAN). Asn-266 contributes to the L-phenylalanine binding site.

The protein belongs to the Glu/Leu/Phe/Val dehydrogenases family.

It carries out the reaction L-phenylalanine + NAD(+) + H2O = 3-phenylpyruvate + NH4(+) + NADH + H(+). It functions in the pathway amino-acid biosynthesis; L-phenylalanine biosynthesis; L-phenylalanine from phenylpyruvate (PDH route): step 1/1. Catalyzes the reversible NAD(+)-dependent oxidative deamination of L-phenylalanine to phenylpyruvate. The polypeptide is Phenylalanine dehydrogenase (Caldalkalibacillus thermarum (strain TA2.A1)).